A 773-amino-acid chain; its full sequence is Circadian clock protein PASD1 (773 aa).

The 73-residue stretch at 30 to 102 folds into the PAS domain; that stretch reads YDYFNQVTLQ…IILKFPLLNS (73 aa). The disordered stretch occupies residues 313–361; the sequence is SVDQEGPMDQQDPENPVAPLDQAGLMDPVDPEDSVDLGAAGASAQPLQP. The interval 365 to 412 is necessary for transcriptional repression; sequence VAYDIISQELELMKKLKEQLEERTWLLHDAIQNQQNALELMMDHLQKQ. Positions 365–412 form a coiled coil; that stretch reads VAYDIISQELELMKKLKEQLEERTWLLHDAIQNQQNALELMMDHLQKQ. Disordered stretches follow at residues 427 to 448, 506 to 569, and 732 to 773; these read SEAVPKKQQKQHAGQVKRPLPH, QRKV…QLQE, and GVEG…NKPC. Residues 475 to 553 are a coiled coil; sequence VAFNQQQLVQ…QERKKWQGQM (79 aa). The segment covering 506 to 536 has biased composition (basic and acidic residues); sequence QRKVQKQKKMQEKKKLQEQKMQEKKKLQEQR.

Interacts with the CLOCK-BMAL1 heterodimer; this interaction inhibits CLOCK-BMAL1 transcriptional activation and suppress circadian timekeeping. Interacts with BMAL1. As to expression, testis-specific. Expressed in a broad range of cancer cells, including melanoma, lung cancer, and breast cancer (at protein level). Testis-specific. Found in histologically normal tissues from patients with uterus, lung and small intestine cancers. Widespread expression seen in solid tumors and diffuse large B-cell lymphoma (DLBCL)-derived cell lines. Isoform 2 is expressed in all DLBCL-derived cell lines, while isoform 1 is preferentially expressed in cell lines derived from non-germinal center DLBCL.

It localises to the nucleus. Functionally, functions as a suppressor of the biological clock that drives the daily circadian rhythms of cells throughout the body. Acts as a nuclear repressor of the CLOCK-BMAL1 heterodimer-mediated transcriptional activation of the core clock components. Inhibits circadian clock function in cancer cells, when overexpressed. This Homo sapiens (Human) protein is Circadian clock protein PASD1.